The following is a 162-amino-acid chain: Small ribosomal subunit protein uS9 (162 aa).

Belongs to the universal ribosomal protein uS9 family.

The sequence is that of Small ribosomal subunit protein uS9 from Parvibaculum lavamentivorans (strain DS-1 / DSM 13023 / NCIMB 13966).